Here is a 449-residue protein sequence, read N- to C-terminus: Glutamyl-tRNA reductase (449 aa).

Residues 58–61, Ser121, 126–128, and Gln132 contribute to the substrate site; these read TCNR and ETQ. Residue Cys59 is the Nucleophile of the active site. 203–208 is an NADP(+) binding site; sequence GLGEMA.

Belongs to the glutamyl-tRNA reductase family. In terms of assembly, homodimer.

The catalysed reaction is (S)-4-amino-5-oxopentanoate + tRNA(Glu) + NADP(+) = L-glutamyl-tRNA(Glu) + NADPH + H(+). Its pathway is porphyrin-containing compound metabolism; protoporphyrin-IX biosynthesis; 5-aminolevulinate from L-glutamyl-tRNA(Glu): step 1/2. Catalyzes the NADPH-dependent reduction of glutamyl-tRNA(Glu) to glutamate 1-semialdehyde (GSA). The chain is Glutamyl-tRNA reductase from Helicobacter pylori (strain G27).